A 173-amino-acid chain; its full sequence is ATP-dependent protease subunit HslV (173 aa).

Threonine 2 is a catalytic residue. Na(+) contacts are provided by glycine 158, aspartate 161, and threonine 164.

Belongs to the peptidase T1B family. HslV subfamily. As to quaternary structure, a double ring-shaped homohexamer of HslV is capped on each side by a ring-shaped HslU homohexamer. The assembly of the HslU/HslV complex is dependent on binding of ATP.

It is found in the cytoplasm. The catalysed reaction is ATP-dependent cleavage of peptide bonds with broad specificity.. Its activity is regulated as follows. Allosterically activated by HslU binding. In terms of biological role, protease subunit of a proteasome-like degradation complex believed to be a general protein degrading machinery. This is ATP-dependent protease subunit HslV from Actinobacillus succinogenes (strain ATCC 55618 / DSM 22257 / CCUG 43843 / 130Z).